The sequence spans 414 residues: COUP transcription factor 2 (414 aa).

The tract at residues 1 to 72 (MAMVVSTWRD…PGGPGSDKQQ (72 aa)) is disordered. The span at 27–37 (PPVPGPPPGAP) shows a compositional bias: pro residues. Residues 38-57 (HTPQTPGQGGPASTPAQTAA) are compositionally biased toward low complexity. T51 is subject to Phosphothreonine. The span at 58–67 (GGQGGPGGPG) shows a compositional bias: gly residues. The segment at residues 76–151 (HIECVVCGDK…VGMRREAVQR (76 aa)) is a DNA-binding region (nuclear receptor). 2 consecutive NR C4-type zinc fingers follow at residues 79–99 (CVVCGDKSSGKHYGQFTCEGC) and 115–139 (CRANRNCPIDQHHRNQCQYCRLKKC). Residues 117–414 (ANRNCPIDQH…SFNWPYMAIQ (298 aa)) are interaction with ZFPM2. Residues 177 to 403 (YLSGYISLLL…TLIRDMLLSG (227 aa)) form the NR LBD domain. Positions 337–414 (LQEKSQCALE…SFNWPYMAIQ (78 aa)) are important for dimerization.

This sequence belongs to the nuclear hormone receptor family. NR2 subfamily. Interacts with SQSTM1. Binds DNA as a dimer; homodimer or heterodimer with NR2F6. Interacts with NCOA1, NCOA2, NCOA3 and PPARGC1A. Interacts with ZFPM2.

The protein resides in the nucleus. In terms of biological role, ligand-activated transcription factor. Activated by high concentrations of 9-cis-retinoic acid and all-trans-retinoic acid, but not by dexamethasone, cortisol or progesterone (in vitro). Regulation of the apolipoprotein A-I gene transcription. Binds to DNA site A. May be required to establish ovary identity during early gonad development. This chain is COUP transcription factor 2 (NR2F2), found in Bos taurus (Bovine).